Reading from the N-terminus, the 707-residue chain is Translation initiation factor IF-2 (707 aa).

The span at 55–80 (LAEKPKEEKQKDQKNHEQEAQDKEEK) shows a compositional bias: basic and acidic residues. Residues 55-88 (LAEKPKEEKQKDQKNHEQEAQDKEEKEIEEDSFY) form a disordered region. The tr-type G domain occupies 209-378 (PRPPIVTVMG…LLVAEMEDLK (170 aa)). A G1 region spans residues 218 to 225 (GHVDHGKT). 218–225 (GHVDHGKT) contacts GTP. The tract at residues 243–247 (GITQH) is G2. The tract at residues 264–267 (DTPG) is G3. GTP is bound by residues 264-268 (DTPGH) and 318-321 (NKID). Residues 318–321 (NKID) are G4. The tract at residues 354–356 (SAK) is G5.

This sequence belongs to the TRAFAC class translation factor GTPase superfamily. Classic translation factor GTPase family. IF-2 subfamily.

It localises to the cytoplasm. One of the essential components for the initiation of protein synthesis. Protects formylmethionyl-tRNA from spontaneous hydrolysis and promotes its binding to the 30S ribosomal subunits. Also involved in the hydrolysis of GTP during the formation of the 70S ribosomal complex. The polypeptide is Translation initiation factor IF-2 (Caldanaerobacter subterraneus subsp. tengcongensis (strain DSM 15242 / JCM 11007 / NBRC 100824 / MB4) (Thermoanaerobacter tengcongensis)).